A 490-amino-acid polypeptide reads, in one-letter code: Bifunctional protein HldE (490 aa).

The segment at 1-330 (MERKNVESLF…GSMGFQHSDS (330 aa)) is ribokinase. Position 205 to 208 (205 to 208 (NRKE)) interacts with ATP. Aspartate 275 is a catalytic residue. Positions 356-490 (FTNGCFDLLH…DKILRAYGEE (135 aa)) are cytidylyltransferase.

It in the N-terminal section; belongs to the carbohydrate kinase PfkB family. The protein in the C-terminal section; belongs to the cytidylyltransferase family. In terms of assembly, homodimer.

The enzyme catalyses D-glycero-beta-D-manno-heptose 7-phosphate + ATP = D-glycero-beta-D-manno-heptose 1,7-bisphosphate + ADP + H(+). It catalyses the reaction D-glycero-beta-D-manno-heptose 1-phosphate + ATP + H(+) = ADP-D-glycero-beta-D-manno-heptose + diphosphate. It participates in nucleotide-sugar biosynthesis; ADP-L-glycero-beta-D-manno-heptose biosynthesis; ADP-L-glycero-beta-D-manno-heptose from D-glycero-beta-D-manno-heptose 7-phosphate: step 1/4. The protein operates within nucleotide-sugar biosynthesis; ADP-L-glycero-beta-D-manno-heptose biosynthesis; ADP-L-glycero-beta-D-manno-heptose from D-glycero-beta-D-manno-heptose 7-phosphate: step 3/4. Functionally, catalyzes the phosphorylation of D-glycero-D-manno-heptose 7-phosphate at the C-1 position to selectively form D-glycero-beta-D-manno-heptose-1,7-bisphosphate. In terms of biological role, catalyzes the ADP transfer from ATP to D-glycero-beta-D-manno-heptose 1-phosphate, yielding ADP-D-glycero-beta-D-manno-heptose. The chain is Bifunctional protein HldE from Geobacter metallireducens (strain ATCC 53774 / DSM 7210 / GS-15).